Here is a 202-residue protein sequence, read N- to C-terminus: Guanylate kinase (202 aa).

Positions 3–181 constitute a Guanylate kinase-like domain; it reads GNLFVVAAPS…ALDDLRAVVR (179 aa). Position 10–17 (10–17) interacts with ATP; sequence APSGAGKT.

It belongs to the guanylate kinase family.

It is found in the cytoplasm. The catalysed reaction is GMP + ATP = GDP + ADP. In terms of biological role, essential for recycling GMP and indirectly, cGMP. This is Guanylate kinase from Dechloromonas aromatica (strain RCB).